The sequence spans 482 residues: High affinity 3',5'-cyclic-AMP phosphodiesterase 7A (482 aa).

The residue at position 84 (serine 84) is a Phosphoserine. A PDEase domain is found at 136 to 458; the sequence is LDDDYNGQAK…ASWKGLQREQ (323 aa). Catalysis depends on histidine 212, which acts as the Proton donor. Residues histidine 216, histidine 252, aspartate 253, and aspartate 362 each coordinate a divalent metal cation.

It belongs to the cyclic nucleotide phosphodiesterase family. PDE7 subfamily. In terms of assembly, interacts with CBFA2T3. A divalent metal cation serves as cofactor. As to expression, found at high levels in skeletal muscle and at low levels in a variety of tissues including brain and heart. It is expressed as well in two T-cell lines. In terms of tissue distribution, found abundantly in skeletal muscle and at low levels in heart.

The protein resides in the cytoplasm. The protein localises to the cytosol. It catalyses the reaction 3',5'-cyclic AMP + H2O = AMP + H(+). The protein operates within purine metabolism; 3',5'-cyclic AMP degradation; AMP from 3',5'-cyclic AMP: step 1/1. With respect to regulation, insensitive to all selective PDE inhibitors. In terms of biological role, hydrolyzes the second messenger cAMP, which is a key regulator of many important physiological processes. May have a role in muscle signal transduction. This is High affinity 3',5'-cyclic-AMP phosphodiesterase 7A from Homo sapiens (Human).